A 160-amino-acid chain; its full sequence is Cyclic pyranopterin monophosphate synthase (160 aa).

Substrate-binding positions include Leu77–His79 and Met114–Glu115. The active site involves Asp129.

Belongs to the MoaC family. Homohexamer; trimer of dimers.

It catalyses the reaction (8S)-3',8-cyclo-7,8-dihydroguanosine 5'-triphosphate = cyclic pyranopterin phosphate + diphosphate. It functions in the pathway cofactor biosynthesis; molybdopterin biosynthesis. In terms of biological role, catalyzes the conversion of (8S)-3',8-cyclo-7,8-dihydroguanosine 5'-triphosphate to cyclic pyranopterin monophosphate (cPMP). The polypeptide is Cyclic pyranopterin monophosphate synthase (Alcanivorax borkumensis (strain ATCC 700651 / DSM 11573 / NCIMB 13689 / SK2)).